Here is an 892-residue protein sequence, read N- to C-terminus: MSVDQDVVDEAYQYYAEDKRQISDKARKFIEFIDPILRKYSKLFRYYQNFAKFTLEYYYKLFYPFLEKLPENVVEDLKRQIINEIMSNPNQSIRDVLAKAVQKEAQRIEEQLQRRPQRAKQQPQKTKTSEVANQRVSRSAENQGKRGNEEKQQQKTPGKTEEASGAEQESGEEGNQQEESGEEQEGVKGSRSKQREEQEEEVSESEGKQSEESGESESEEGQSSEETQLSSSGEGNQQEEGKGGEGEGAETEEGGRRGEAESEQEEGEETGNGQESSGEAQNGGESGESEGEITESESASEEQTGSKGKSGQQGEEGQQQSGSEGEEGAEQEESGEEGNQQEGVGKQKKRSSRGQESEAGEEPGSAPEETQLSSGEEEAGQESGGETGSEQGFGEEGEQGQESETTGKQKGKKREATESGGGAESESEEGQSPEETQEGGEGGAETEEGGQGSEAEGTAAEGEVGQPSEQGVSSSTGSGQRSEGSEASEEQNAGESGEGSESEGAESIAGEQTGSSSESAGSEQLGSQQGELSLEEGGRGYAHGDEDLLSSPQEINSILQTLSQLRDTVQQLRNYDFYSNAIDERTFDDQNVSEHRKEKEIENLYDTANNVQKLLKDLNVSEGEQNKILQELVTQYSLRRLLGNIATKYKGLLDFVRNKGESEVESRHGSGKGPSSTMGDDLSRLFIKEYAKLSNPIQQKMFLLDYLNGALSIHKSEEKKQGDFLFVIDSSGSMEGNKIATALAIPLVTYKKYKGKRNILVETFSDEPSPIYNIKNIANVLGSMKFGGTNIGSAVLYALKNIDKPDSDYDRKLRESLRKTRTLILLTDGEDEIPDDIAREINSLKKKNKVELLCYGIDLGERGLKTLKEICDEVYAVGSNNFGNIVLKRLVH.

Residues 109–548 (EEQLQRRPQR…RGYAHGDEDL (440 aa)) form a disordered region. Residues 129-142 (SEVANQRVSRSAEN) are compositionally biased toward polar residues. A compositionally biased stretch (basic and acidic residues) spans 143-162 (QGKRGNEEKQQQKTPGKTEE). The segment covering 169–184 (ESGEEGNQQEESGEEQ) has biased composition (acidic residues). A compositionally biased stretch (basic and acidic residues) spans 185–196 (EGVKGSRSKQRE). Acidic residues predominate over residues 212–223 (ESGESESEEGQS). 2 stretches are compositionally biased toward low complexity: residues 224 to 238 (SEET…GNQQ) and 271 to 283 (GNGQ…AQNG). Residues 287-300 (GESEGEITESESAS) show a composition bias toward acidic residues. A compositionally biased stretch (low complexity) spans 301–323 (EEQTGSKGKSGQQGEEGQQQSGS). Acidic residues-rich tracts occupy residues 324 to 336 (EGEE…ESGE) and 425 to 448 (SESE…ETEE). A compositionally biased stretch (low complexity) spans 453–466 (SEAEGTAAEGEVGQ). 2 stretches are compositionally biased toward polar residues: residues 467 to 481 (PSEQ…SGQR) and 512 to 531 (QTGS…QQGE). A compositionally biased stretch (basic and acidic residues) spans 536 to 546 (EGGRGYAHGDE). Positions 553–620 (QEINSILQTL…VQKLLKDLNV (68 aa)) form a coiled coil. Residues 723–892 (DFLFVIDSSG…GNIVLKRLVH (170 aa)) enclose the VWFA domain.

The protein is Putative VWFA domain-containing protein ORF892 of Acidianus two-tailed virus (ATV).